The primary structure comprises 315 residues: Nucleotide-binding protein PsycPRwf_2129 (315 aa).

An ATP-binding site is contributed by 29-36 (GRSGSGKT). 79–82 (DIRT) is a GTP binding site.

It belongs to the RapZ-like family.

Its function is as follows. Displays ATPase and GTPase activities. This is Nucleotide-binding protein PsycPRwf_2129 from Psychrobacter sp. (strain PRwf-1).